Reading from the N-terminus, the 1228-residue chain is Reverse gyrase (1228 aa).

The segment at 1–41 (MEVPLVAYLHSCPNCGGPITSDRLASGLPCRECLPDGAKAG) adopts an RG N-terminal-type zinc-finger fold. Zn(2+) is bound by residues Cys12, Cys15, Cys30, and Cys33. Residues Gln88 and 105–112 (APTGSGKT) contribute to the ATP site. Residues 92-255 (ARRFVRGKSF…NLTKQLRKAE (164 aa)) enclose the Helicase ATP-binding domain. The DEAD box motif lies at 211-214 (DDVD). The interval 631-1228 (DLMRTILMVV…RKEVLPHLAS (598 aa)) is topoisomerase I. The region spanning 635–809 (TILMVVESPT…DIRRVEFHEV (175 aa)) is the Toprim domain. Positions 641 and 778 each coordinate Mg(2+). Residues 825–1223 (NFSLVKAQIV…LYDEFRKEVL (399 aa)) enclose the Topo IA-type catalytic domain. The active-site O-(5'-phospho-DNA)-tyrosine intermediate is Tyr967.

This sequence in the N-terminal section; belongs to the DEAD box helicase family. DDVD subfamily. The protein in the C-terminal section; belongs to the type IA topoisomerase family. In terms of assembly, monomer. Zn(2+) is required as a cofactor. Requires Mg(2+) as cofactor.

Its subcellular location is the cytoplasm. The catalysed reaction is ATP + H2O = ADP + phosphate + H(+). Functionally, modifies the topological state of DNA by introducing positive supercoils in an ATP-dependent process, increasing the linking number in steps of +1. Binds to single-stranded DNA, transiently cleaves and then rejoins the ends, introducing a positive supercoil in the process. The scissile phosphodiester is attacked by the catalytic tyrosine of the enzyme, resulting in the formation of a DNA-(5'-phosphotyrosyl)-enzyme intermediate. Probably involved in rewinding DNA strands in regions of the chromosome that have opened up to allow replication, transcription, DNA repair and/or for DNA protection. The protein is Reverse gyrase of Pyrobaculum aerophilum (strain ATCC 51768 / DSM 7523 / JCM 9630 / CIP 104966 / NBRC 100827 / IM2).